Reading from the N-terminus, the 347-residue chain is Beta-hexosaminidase (347 aa).

Substrate contacts are provided by residues Asp64, Arg72, Arg138, and 168–169 (KH). The active-site Proton donor/acceptor is the His181. Catalysis depends on Asp251, which acts as the Nucleophile.

Belongs to the glycosyl hydrolase 3 family. NagZ subfamily.

It is found in the cytoplasm. It carries out the reaction Hydrolysis of terminal non-reducing N-acetyl-D-hexosamine residues in N-acetyl-beta-D-hexosaminides.. Its pathway is cell wall biogenesis; peptidoglycan recycling. Its function is as follows. Plays a role in peptidoglycan recycling by cleaving the terminal beta-1,4-linked N-acetylglucosamine (GlcNAc) from peptide-linked peptidoglycan fragments, giving rise to free GlcNAc, anhydro-N-acetylmuramic acid and anhydro-N-acetylmuramic acid-linked peptides. The chain is Beta-hexosaminidase from Thioalkalivibrio sulfidiphilus (strain HL-EbGR7).